The sequence spans 215 residues: Small ribosomal subunit protein bS6 (215 aa).

Disordered regions lie at residues 121 to 153 (RENN…QKPK) and 187 to 215 (NQRQ…KDKQ). Residues 144-153 (SRTEKAQKPK) are compositionally biased toward basic and acidic residues. Positions 188 to 198 (QRQNQQNNNNN) are enriched in low complexity. Over residues 199–215 (RFDRNRNRQHNRFKDKQ) the composition is skewed to basic and acidic residues.

Belongs to the bacterial ribosomal protein bS6 family.

Binds together with bS18 to 16S ribosomal RNA. This chain is Small ribosomal subunit protein bS6 (rpsF), found in Mycoplasma pneumoniae (strain ATCC 29342 / M129 / Subtype 1) (Mycoplasmoides pneumoniae).